A 122-amino-acid polypeptide reads, in one-letter code: Large ribosomal subunit protein bL19 (122 aa).

This sequence belongs to the bacterial ribosomal protein bL19 family.

Its function is as follows. This protein is located at the 30S-50S ribosomal subunit interface and may play a role in the structure and function of the aminoacyl-tRNA binding site. This Mycoplasmoides gallisepticum (strain R(low / passage 15 / clone 2)) (Mycoplasma gallisepticum) protein is Large ribosomal subunit protein bL19.